A 180-amino-acid chain; its full sequence is ADP-ribosylation factor-like protein 1 (180 aa).

Residue Gly2 is the site of N-myristoyl glycine attachment. GTP contacts are provided by residues 23–30, 66–70, and 125–128; these read GLDGAGKT, DLGGQ, and NKQD.

This sequence belongs to the small GTPase superfamily. Arf family.

Its function is as follows. GTP-binding protein involved in protein trafficking; may modulate vesicle budding and uncoating within the Golgi apparatus. This chain is ADP-ribosylation factor-like protein 1 (Arl1), found in Drosophila melanogaster (Fruit fly).